We begin with the raw amino-acid sequence, 340 residues long: Probable protein phosphatase 2C 21 (340 aa).

A disordered region spans residues 1–21 (MGASPSRPLEQSPSSSEGENH). Residues 24–305 (KYASYTTQGF…DNATAILVKF (282 aa)) form the PPM-type phosphatase domain. 4 residues coordinate Mn(2+): D58, G59, D254, and D296. The segment at 311-340 (DPDEVASARDEHQHNPEGGDEKLDINNDND) is disordered. The span at 316–340 (ASARDEHQHNPEGGDEKLDINNDND) shows a compositional bias: basic and acidic residues.

The protein belongs to the PP2C family. Mg(2+) is required as a cofactor. The cofactor is Mn(2+).

It carries out the reaction O-phospho-L-seryl-[protein] + H2O = L-seryl-[protein] + phosphate. It catalyses the reaction O-phospho-L-threonyl-[protein] + H2O = L-threonyl-[protein] + phosphate. This Oryza sativa subsp. japonica (Rice) protein is Probable protein phosphatase 2C 21.